A 197-amino-acid polypeptide reads, in one-letter code: Carnitine operon protein CaiE (197 aa).

Residues 177–197 (TAPEANRPRLRGTTEVKPKGQ) are disordered. Residues 188–197 (GTTEVKPKGQ) show a composition bias toward basic and acidic residues.

It belongs to the transferase hexapeptide repeat family.

Its pathway is amine and polyamine metabolism; carnitine metabolism. Functionally, overproduction of CaiE stimulates the activity of CaiB and CaiD. This is Carnitine operon protein CaiE from Proteus sp. (strain LE138).